The following is a 590-amino-acid chain: Putative DEAD-box ATP-dependent RNA helicase 51 (590 aa).

A disordered region spans residues 1 to 81; sequence MHPIKLCARS…KQGEGKKGSG (81 aa). Polar residues predominate over residues 40-51; the sequence is AACNSEGENNAT. A compositionally biased stretch (basic and acidic residues) spans 59-78; the sequence is NKKMKEEKSKRKKKQGEGKK. The Q motif signature appears at 86 to 114; it reads KLFSDLPISDLTANAIRDMNYTHLTEIQA. Residues 117–293 enclose the Helicase ATP-binding domain; it reads IPPLMLGSDV…KLTFGSKEER (177 aa). 130 to 137 contacts ATP; it reads AKTGSGKT. The DEAD box signature appears at 240-243; that stretch reads DEAD. In terms of domain architecture, Helicase C-terminal spans 329-481; sequence VLYAFLKKAL…ELVPKLQPYL (153 aa). The disordered stretch occupies residues 549-590; that stretch reads LESSASKHRKKRNVNTGRRHGIGPSNPYGRKGSDDRRQFARF. Over residues 554-569 the composition is skewed to basic residues; it reads SKHRKKRNVNTGRRHG. Over residues 579-590 the composition is skewed to basic and acidic residues; sequence KGSDDRRQFARF.

The protein belongs to the DEAD box helicase family. DDX18/HAS1 subfamily.

It catalyses the reaction ATP + H2O = ADP + phosphate + H(+). The protein is Putative DEAD-box ATP-dependent RNA helicase 51 of Oryza sativa subsp. japonica (Rice).